The chain runs to 187 residues: Large ribosomal subunit protein uL5 (187 aa).

This sequence belongs to the universal ribosomal protein uL5 family. In terms of assembly, part of the 50S ribosomal subunit; part of the 5S rRNA/L5/L18/L25 subcomplex. Contacts the 5S rRNA and the P site tRNA. Forms a bridge to the 30S subunit in the 70S ribosome.

Its function is as follows. This is one of the proteins that bind and probably mediate the attachment of the 5S RNA into the large ribosomal subunit, where it forms part of the central protuberance. In the 70S ribosome it contacts protein S13 of the 30S subunit (bridge B1b), connecting the 2 subunits; this bridge is implicated in subunit movement. Contacts the P site tRNA; the 5S rRNA and some of its associated proteins might help stabilize positioning of ribosome-bound tRNAs. In Mycobacterium bovis (strain ATCC BAA-935 / AF2122/97), this protein is Large ribosomal subunit protein uL5.